Here is a 73-residue protein sequence, read N- to C-terminus: Small, acid-soluble spore protein C2 (73 aa).

It belongs to the alpha/beta-type SASP family.

SASP are bound to spore DNA. They are double-stranded DNA-binding proteins that cause DNA to change to an a-like conformation. They protect the DNA backbone from chemical and enzymatic cleavage and are thus involved in dormant spore's high resistance to UV light. This chain is Small, acid-soluble spore protein C2 (SASP-C2), found in Priestia megaterium (Bacillus megaterium).